Reading from the N-terminus, the 106-residue chain is Tapetal oleosin GRP-19 (106 aa).

The next 3 membrane-spanning stretches (helical) occupy residues 14-34 (ALALLTFAGITLGGSVVACII), 37-57 (PLFVIFSPVLVPATIATTLLA), and 58-78 (SGFTASGSFGATAFTILSWLY). Residues 84–106 (RDLPKIPGLTPPAPASNPAGSGV) form a disordered region.

It belongs to the oleosin family. Post-translationally, proteolytically cleaved following anther tapetal breakdown. In terms of tissue distribution, present in pollen (at protein level). Inflorescence-specific expression, especially in flowers florets.

The protein resides in the secreted. The protein localises to the extracellular space. It is found in the extracellular matrix. It localises to the pollen coat. Its subcellular location is the lipid droplet. The protein resides in the membrane. Its function is as follows. Lipid-binding oleosin involved in anther tapetum development, especially for the physiology of tapetosomes. Also implicated in the formation of pollen coat. In Arabidopsis thaliana (Mouse-ear cress), this protein is Tapetal oleosin GRP-19.